Reading from the N-terminus, the 882-residue chain is Cutinase transcription factor 1 beta (882 aa).

A compositionally biased stretch (low complexity) spans 1 to 20; that stretch reads MNAETPEGSAAPPSPASTSA. Residues 1-49 form a disordered region; it reads MNAETPEGSAAPPSPASTSAKTVTDKTNKKRASPSGDSEQPTKVTKRRA. Residues 53 to 81 constitute a DNA-binding region (zn(2)-C6 fungal-type); that stretch reads CVSCRARKVRCDVVEGAPCGNCRWDNVEC. The tract at residues 117-148 is disordered; the sequence is NPMGMSTADLRRPSSGSAISTSSIDGPSSFLS. Residues 130–139 show a composition bias toward low complexity; the sequence is SSGSAISTSS.

The protein resides in the nucleus. This Fusarium vanettenii (Neocosmospora pisi) protein is Cutinase transcription factor 1 beta (CTF1-BETA).